Reading from the N-terminus, the 224-residue chain is Ribose-5-phosphate isomerase A (224 aa).

Residues 34–37, 87–90, and 100–103 contribute to the substrate site; these read TGST, DGAD, and KGGG. Catalysis depends on glutamate 109, which acts as the Proton acceptor. Lysine 127 is a binding site for substrate.

It belongs to the ribose 5-phosphate isomerase family. Homodimer.

The enzyme catalyses aldehydo-D-ribose 5-phosphate = D-ribulose 5-phosphate. It participates in carbohydrate degradation; pentose phosphate pathway; D-ribose 5-phosphate from D-ribulose 5-phosphate (non-oxidative stage): step 1/1. Catalyzes the reversible conversion of ribose-5-phosphate to ribulose 5-phosphate. This Francisella tularensis subsp. novicida (strain U112) protein is Ribose-5-phosphate isomerase A.